The sequence spans 638 residues: Trichohyalin-like protein 1 (638 aa).

The EF-hand domain occupies 49–84; it reads HVFHAVERKLNLLNFDRDGTISFEEFVLAIFSLLNP. A disordered region spans residues 134–638; sequence SEMASSGQPS…ALEAESLEAQ (505 aa). Residues 166 to 179 show a composition bias toward polar residues; the sequence is LPRNVSEPNDPENQ. 3 stretches are compositionally biased toward basic and acidic residues: residues 221–246, 294–309, and 318–328; these read IPRE…QRPT, DDTK…KDAG, and EEPKADAKVAE. Polar residues predominate over residues 343 to 357; sequence DQSVQSRSRNVSETS. Composition is skewed to basic and acidic residues over residues 358–372, 395–409, 419–435, 479–490, 526–548, and 622–631; these read SRGE…HERI, REND…KDPS, EIKE…HSEE, RIQDKPVRKEDH, AEPH…KQES, and AGRENRKALE.

The protein belongs to the S-100 family.

This Mus musculus (Mouse) protein is Trichohyalin-like protein 1 (Tchhl1).